The chain runs to 449 residues: UDP-N-acetylglucosamine 1-carboxyvinyltransferase (449 aa).

The segment covering 1–12 (MQVTVNEHDAVE) has biased composition (basic and acidic residues). Positions 1 to 30 (MQVTVNEHDAVERVATATPAGNREAHAHGT) are disordered. 51 to 52 (KN) contributes to the phosphoenolpyruvate binding site. R121 lines the UDP-N-acetyl-alpha-D-glucosamine pocket. The active-site Proton donor is C145. C145 is modified (2-(S-cysteinyl)pyruvic acid O-phosphothioketal). Residues 150–154 (RPVDQ), D333, and I355 each bind UDP-N-acetyl-alpha-D-glucosamine.

The protein belongs to the EPSP synthase family. MurA subfamily.

It localises to the cytoplasm. The catalysed reaction is phosphoenolpyruvate + UDP-N-acetyl-alpha-D-glucosamine = UDP-N-acetyl-3-O-(1-carboxyvinyl)-alpha-D-glucosamine + phosphate. It functions in the pathway cell wall biogenesis; peptidoglycan biosynthesis. Its function is as follows. Cell wall formation. Adds enolpyruvyl to UDP-N-acetylglucosamine. The polypeptide is UDP-N-acetylglucosamine 1-carboxyvinyltransferase (Burkholderia pseudomallei (strain 1710b)).